Here is a 465-residue protein sequence, read N- to C-terminus: 3-isopropylmalate dehydratase large subunit (465 aa).

Residues Cys-347, Cys-407, and Cys-410 each coordinate [4Fe-4S] cluster.

This sequence belongs to the aconitase/IPM isomerase family. LeuC type 1 subfamily. In terms of assembly, heterodimer of LeuC and LeuD. It depends on [4Fe-4S] cluster as a cofactor.

The enzyme catalyses (2R,3S)-3-isopropylmalate = (2S)-2-isopropylmalate. It participates in amino-acid biosynthesis; L-leucine biosynthesis; L-leucine from 3-methyl-2-oxobutanoate: step 2/4. In terms of biological role, catalyzes the isomerization between 2-isopropylmalate and 3-isopropylmalate, via the formation of 2-isopropylmaleate. The sequence is that of 3-isopropylmalate dehydratase large subunit from Aeromonas salmonicida (strain A449).